A 336-amino-acid chain; its full sequence is Gibberellin 2-beta-dioxygenase 7 (336 aa).

The Fe2OG dioxygenase domain occupies 191–291; the sequence is LENSFLRLNK…RMSIAFFVCP (101 aa). Fe cation-binding residues include His216, Asp218, and His272. Residue Arg282 is part of the active site. 2-oxoglutarate is bound at residue Arg282.

This sequence belongs to the iron/ascorbate-dependent oxidoreductase family. GA2OX subfamily. Requires Fe(2+) as cofactor.

It carries out the reaction gibberellin A1 + 2-oxoglutarate + O2 = gibberellin A8 + succinate + CO2. Its pathway is plant hormone biosynthesis; gibberellin biosynthesis. Catalyzes the 2-beta-hydroxylation of gibberellins (GA) precursors, rendering them unable to be converted to active GAs. Hydroxylates the C20-GA GA12 and GA53, but is not active on C19-GAs, like GA1, GA4, GA9 and GA20. The chain is Gibberellin 2-beta-dioxygenase 7 (GA2OX7) from Arabidopsis thaliana (Mouse-ear cress).